We begin with the raw amino-acid sequence, 361 residues long: sn-glycerol-3-phosphate import ATP-binding protein UgpC (361 aa).

The region spanning 4–235 (LSFRNLKKTY…PASTFVAGFI (232 aa)) is the ABC transporter domain. 37-44 (GPSGCGKS) contributes to the ATP binding site.

It belongs to the ABC transporter superfamily. sn-glycerol-3-phosphate importer (TC 3.A.1.1.3) family. The complex is composed of two ATP-binding proteins (UgpC), two transmembrane proteins (UgpA and UgpE) and a solute-binding protein (UgpB).

It localises to the cell inner membrane. The catalysed reaction is sn-glycerol 3-phosphate(out) + ATP + H2O = sn-glycerol 3-phosphate(in) + ADP + phosphate + H(+). Its function is as follows. Part of the ABC transporter complex UgpBAEC involved in sn-glycerol-3-phosphate (G3P) import. Responsible for energy coupling to the transport system. This chain is sn-glycerol-3-phosphate import ATP-binding protein UgpC, found in Bordetella avium (strain 197N).